A 396-amino-acid chain; its full sequence is S-adenosylmethionine synthase (396 aa).

Residue His-16 coordinates ATP. Asp-18 contributes to the Mg(2+) binding site. Glu-44 is a K(+) binding site. 2 residues coordinate L-methionine: Glu-57 and Gln-100. The segment at 100–110 (QSPDIAQGVDR) is flexible loop. Residues 167–169 (DAK), 232–233 (RF), Asp-241, 247–248 (RK), Ala-264, and Lys-268 each bind ATP. Asp-241 contacts L-methionine. Lys-272 contacts L-methionine.

It belongs to the AdoMet synthase family. Homotetramer; dimer of dimers. It depends on Mg(2+) as a cofactor. K(+) serves as cofactor.

Its subcellular location is the cytoplasm. The catalysed reaction is L-methionine + ATP + H2O = S-adenosyl-L-methionine + phosphate + diphosphate. The protein operates within amino-acid biosynthesis; S-adenosyl-L-methionine biosynthesis; S-adenosyl-L-methionine from L-methionine: step 1/1. Its function is as follows. Catalyzes the formation of S-adenosylmethionine (AdoMet) from methionine and ATP. The overall synthetic reaction is composed of two sequential steps, AdoMet formation and the subsequent tripolyphosphate hydrolysis which occurs prior to release of AdoMet from the enzyme. The polypeptide is S-adenosylmethionine synthase (Ralstonia nicotianae (strain ATCC BAA-1114 / GMI1000) (Ralstonia solanacearum)).